The sequence spans 364 residues: Chorismate synthase (364 aa).

The interval 41–60 (MQHDLDRRRPGTSRYTTARR) is disordered. Residues Arg-48 and Arg-54 each contribute to the NADP(+) site. Residues 125–127 (RSS), 238–239 (NA), Gly-278, 293–297 (KPTSS), and Arg-319 contribute to the FMN site.

Belongs to the chorismate synthase family. In terms of assembly, homotetramer. It depends on FMNH2 as a cofactor.

It carries out the reaction 5-O-(1-carboxyvinyl)-3-phosphoshikimate = chorismate + phosphate. It functions in the pathway metabolic intermediate biosynthesis; chorismate biosynthesis; chorismate from D-erythrose 4-phosphate and phosphoenolpyruvate: step 7/7. Its function is as follows. Catalyzes the anti-1,4-elimination of the C-3 phosphate and the C-6 proR hydrogen from 5-enolpyruvylshikimate-3-phosphate (EPSP) to yield chorismate, which is the branch point compound that serves as the starting substrate for the three terminal pathways of aromatic amino acid biosynthesis. This reaction introduces a second double bond into the aromatic ring system. In Shewanella putrefaciens (strain CN-32 / ATCC BAA-453), this protein is Chorismate synthase.